A 257-amino-acid chain; its full sequence is MLPSDLVKYKKNSQKIIALTAWDSISGSIAEQANVDLVLVGDSLAMVCLGYKSTLPLTLGNIIYHTNAVSRGFKKNIEEQPLVIADMPFLTYQCGEDKAVEYAGKIIQSTYAKAVKIEGAEPEIQKVISRLIRMGIPVMGHIGLTPQSYLNLGLKKQGESLESQEKIKKEASILEKLGCFSIVLEHIPDLLAKEIQNTLTIPTIGIGAGNYCDGQVRVTADLLGLNDDQPPFCQPIIQGKELFMKKLKEWVESERLN.

2 residues coordinate Mg(2+): aspartate 42 and aspartate 86. 3-methyl-2-oxobutanoate is bound by residues 42–43 (DS), aspartate 86, and lysine 116. A Mg(2+)-binding site is contributed by glutamate 118. Residue glutamate 185 is the Proton acceptor of the active site.

It belongs to the PanB family. Homodecamer; pentamer of dimers. Mg(2+) is required as a cofactor.

The protein localises to the cytoplasm. The enzyme catalyses 3-methyl-2-oxobutanoate + (6R)-5,10-methylene-5,6,7,8-tetrahydrofolate + H2O = 2-dehydropantoate + (6S)-5,6,7,8-tetrahydrofolate. The protein operates within cofactor biosynthesis; (R)-pantothenate biosynthesis; (R)-pantoate from 3-methyl-2-oxobutanoate: step 1/2. In terms of biological role, catalyzes the reversible reaction in which hydroxymethyl group from 5,10-methylenetetrahydrofolate is transferred onto alpha-ketoisovalerate to form ketopantoate. In Prochlorococcus marinus (strain MIT 9215), this protein is 3-methyl-2-oxobutanoate hydroxymethyltransferase.